The following is a 327-amino-acid chain: Complex I intermediate-associated protein 30, mitochondrial (327 aa).

The transit peptide at 1–24 (MALVHKLLRDTYILRKFSKPTSAL) directs the protein to the mitochondrion. The disordered stretch occupies residues 42–63 (PVASPGKASSQRKTEGDLQGDH). The segment covering 53-63 (RKTEGDLQGDH) has biased composition (basic and acidic residues). S318 carries the post-translational modification Phosphoserine.

Belongs to the CIA30 family. Part of the mitochondrial complex I assembly/MCIA complex that comprises at least the core subunits TMEM126B, NDUFAF1, ECSIT and ACAD9 and complement subunits such as COA1 and TMEM186. Interacts with ECSIT. Interacts with ACAD9. At early stages of complex I assembly, it is found in intermediate subcomplexes that contain different subunits including NDUFB6, NDUFA6, NDUFA9, NDUFS3, NDUFS7, ND1, ND2 and ND3. Interacts with TMEM70 and TMEM242.

Its subcellular location is the mitochondrion. The protein resides in the mitochondrion matrix. Functionally, as part of the MCIA complex, involved in the assembly of the mitochondrial complex I. This is Complex I intermediate-associated protein 30, mitochondrial from Gorilla gorilla gorilla (Western lowland gorilla).